A 351-amino-acid polypeptide reads, in one-letter code: Fructose-1,6-bisphosphatase class 1 (351 aa).

Residues E94, D113, L115, and D116 each contribute to the Mg(2+) site. Residues 116–119 and N207 contribute to the substrate site; that span reads DGSS. E279 lines the Mg(2+) pocket.

This sequence belongs to the FBPase class 1 family. In terms of assembly, homotetramer. Requires Mg(2+) as cofactor.

Its subcellular location is the cytoplasm. The catalysed reaction is beta-D-fructose 1,6-bisphosphate + H2O = beta-D-fructose 6-phosphate + phosphate. Its pathway is carbohydrate biosynthesis; gluconeogenesis. This is Fructose-1,6-bisphosphatase class 1 from Methylobacterium radiotolerans (strain ATCC 27329 / DSM 1819 / JCM 2831 / NBRC 15690 / NCIMB 10815 / 0-1).